A 166-amino-acid chain; its full sequence is Protein FAM89A (166 aa).

The protein belongs to the FAM89 family.

This Xenopus laevis (African clawed frog) protein is Protein FAM89A (fam89a).